The primary structure comprises 332 residues: 2-oxoglutarate-dependent dioxygenase ecdK (332 aa).

The 117-residue stretch at 178-294 (HASELRLNHY…RRSVAFFLKP (117 aa)) folds into the Fe2OG dioxygenase domain. Residues histidine 206, aspartate 208, and histidine 266 each coordinate Fe cation. Residue arginine 285 participates in 2-oxoglutarate binding.

The protein belongs to the iron/ascorbate-dependent oxidoreductase family. The cofactor is Fe(2+).

It participates in antifungal biosynthesis. 2-oxoglutarate-dependent dioxygenase; part of the gene cluster that mediates the biosynthesis of echinocandin B, a fungal lipidated cyclic hexapeptide that acts as an antifungal agent. Linoleoyl-AMP, produced by the fatty-acyl-AMP ligase ecdI, is transferred to the initiation carrier domain (T0) of ecdA. The linoleoyl-S-phosphopantetheinyl-T0 is sequentially extended with L-ornithine, L-threonine, L-proline, L-homotyrosine, L-threonine, and 4R-methyl-L-proline to form the linear hexapeptide. Thereafter, the terminal condensation (C7) performs macrocyclization of the NRPS product and the cyclic scaffold is released from ecdA. All six of the amino acid residues are hydroxylated, including 4R,5R-dihydroxy-L-ornithine, 4R-hydroxyl-L-proline, 3S,4S-dihydroxy-L-homotyrosine, and 3S-hydroxyl-4S-methyl-L-prolin. In the pathway, all the hydroxylation reactions are proposed to occur following completion of the cyclic peptide, so the unhydroxylated precursor produced by ecdA will undergo six rounds of hydroxylation. Five hydroxylase genes (ecdG, ecdH, ecdK, htyE and htyF) are embedded within the echinocandin B (ecd) and L-homotyrosine (hty) clusters. The polypeptide is 2-oxoglutarate-dependent dioxygenase ecdK (Aspergillus rugulosus (Emericella rugulosa)).